A 292-amino-acid chain; its full sequence is F-box/LRR-repeat protein 15 (292 aa).

One can recognise an F-box domain in the interval 12 to 59 (LLDLPWEDVLVPHILSYLPLRHILSLQRVSKPFHSLVHIYLCNCRHFD). LRR repeat units follow at residues 134–155 (HLQNICLGHCDWVDCLSMRSLA), 160–181 (CLEAIDLTACRQLKDDAISYLV), 186–207 (RLKSLSLAVNANISDIAVEETA), 212–233 (DLEHLDLTGCLRVKNDSIRTLA), and 238–259 (NLKSLKVKHCHNVTESSLGNLR).

It belongs to the FBXL15 family. Part of the SCF (SKP1-CUL1-F-box) E3 ubiquitin-protein ligase complex SCF(FBXL15).

The protein localises to the cytoplasm. It participates in protein modification; protein ubiquitination. Its function is as follows. Substrate recognition component of a SCF (SKP1-CUL1-F-box protein) E3 ubiquitin-protein ligase complex which mediates the ubiquitination and subsequent proteasomal degradation of target proteins. Acts as a positive regulator of the BMP signaling pathway. Required for dorsal/ventral pattern formation. This is F-box/LRR-repeat protein 15 (fbxl15) from Xenopus laevis (African clawed frog).